Here is a 508-residue protein sequence, read N- to C-terminus: Photosystem II CP47 reaction center protein (508 aa).

A run of 6 helical transmembrane segments spans residues 21 to 36 (SVHIMHTALVAGWAGS), 101 to 115 (IAFSGLCFLAAIWHW), 140 to 156 (GIHLFLSGVACFGFGAF), 203 to 218 (IAAGTLGILAGLFHLS), 237 to 252 (VLSSSIAAVFFAAFVV), and 457 to 472 (SFALLFFFGHIWHGAR).

Belongs to the PsbB/PsbC family. PsbB subfamily. PSII is composed of 1 copy each of membrane proteins PsbA, PsbB, PsbC, PsbD, PsbE, PsbF, PsbH, PsbI, PsbJ, PsbK, PsbL, PsbM, PsbT, PsbX, PsbY, PsbZ, Psb30/Ycf12, at least 3 peripheral proteins of the oxygen-evolving complex and a large number of cofactors. It forms dimeric complexes. The cofactor is Binds multiple chlorophylls. PSII binds additional chlorophylls, carotenoids and specific lipids..

The protein localises to the plastid membrane. Its function is as follows. One of the components of the core complex of photosystem II (PSII). It binds chlorophyll and helps catalyze the primary light-induced photochemical processes of PSII. PSII is a light-driven water:plastoquinone oxidoreductase, using light energy to abstract electrons from H(2)O, generating O(2) and a proton gradient subsequently used for ATP formation. The polypeptide is Photosystem II CP47 reaction center protein (Cuscuta reflexa (Southern Asian dodder)).